A 178-amino-acid polypeptide reads, in one-letter code: Large ribosomal subunit protein uL5 (178 aa).

It belongs to the universal ribosomal protein uL5 family. As to quaternary structure, part of the 50S ribosomal subunit; part of the 5S rRNA/L5/L18/L25 subcomplex. Contacts the 5S rRNA and the P site tRNA. Forms a bridge to the 30S subunit in the 70S ribosome.

Functionally, this is one of the proteins that bind and probably mediate the attachment of the 5S RNA into the large ribosomal subunit, where it forms part of the central protuberance. In the 70S ribosome it contacts protein S13 of the 30S subunit (bridge B1b), connecting the 2 subunits; this bridge is implicated in subunit movement. Contacts the P site tRNA; the 5S rRNA and some of its associated proteins might help stabilize positioning of ribosome-bound tRNAs. The protein is Large ribosomal subunit protein uL5 of Prochlorococcus marinus subsp. pastoris (strain CCMP1986 / NIES-2087 / MED4).